Consider the following 276-residue polypeptide: F-actin-capping protein subunit beta (276 aa).

It belongs to the F-actin-capping protein beta subunit family. Component of the F-actin capping complex, composed of a heterodimer of an alpha and a beta subunit. Subunit of dynactin, a multiprotein complex part of a tripartite complex with dynein and a adapter, such as BICDL1, BICD2 or HOOK3.

Its subcellular location is the cytoplasm. It localises to the cytoskeleton. In terms of biological role, F-actin-capping proteins bind in a Ca(2+)-independent manner to the fast growing ends of actin filaments (barbed end) thereby blocking the exchange of subunits at these ends. Unlike other capping proteins (such as gelsolin and severin), these proteins do not sever actin filaments. Forms, with CAPZB, the barbed end of the fast growing ends of actin filaments in the dynactin complex and stabilizes dynactin structure. The dynactin multiprotein complex activates the molecular motor dynein for ultra-processive transport along microtubules. The polypeptide is F-actin-capping protein subunit beta (cpb) (Drosophila melanogaster (Fruit fly)).